The chain runs to 440 residues: Ribosomal protein uS12 methylthiotransferase RimO (440 aa).

The 111-residue stretch at 7–117 folds into the MTTase N-terminal domain; it reads PKISFVSLGC…VLDAVHRALP (111 aa). The [4Fe-4S] cluster site is built by Cys-16, Cys-52, Cys-81, Cys-148, Cys-152, and Cys-155. The region spanning 134-370 is the Radical SAM core domain; sequence LTPRHYAYLK…MARQQKISAQ (237 aa). Positions 373–439 constitute a TRAM domain; sequence KRKVGTRQQV…EYDLHGSVAG (67 aa).

This sequence belongs to the methylthiotransferase family. RimO subfamily. Requires [4Fe-4S] cluster as cofactor.

Its subcellular location is the cytoplasm. The enzyme catalyses L-aspartate(89)-[ribosomal protein uS12]-hydrogen + (sulfur carrier)-SH + AH2 + 2 S-adenosyl-L-methionine = 3-methylsulfanyl-L-aspartate(89)-[ribosomal protein uS12]-hydrogen + (sulfur carrier)-H + 5'-deoxyadenosine + L-methionine + A + S-adenosyl-L-homocysteine + 2 H(+). Catalyzes the methylthiolation of an aspartic acid residue of ribosomal protein uS12. The chain is Ribosomal protein uS12 methylthiotransferase RimO from Afipia carboxidovorans (strain ATCC 49405 / DSM 1227 / KCTC 32145 / OM5) (Oligotropha carboxidovorans).